A 333-amino-acid chain; its full sequence is Holliday junction branch migration complex subunit RuvB (333 aa).

The segment at 1-182 is large ATPase domain (RuvB-L); the sequence is MDERLLSGES…FGVLSRLEYY (182 aa). ATP-binding positions include L21, R22, G63, K66, T67, T68, 129 to 131, R172, Y182, and R219; that span reads EDF. T67 lines the Mg(2+) pocket. Positions 183 to 253 are small ATPAse domain (RuvB-S); the sequence is TVDQLSAIVE…ITQMALELLQ (71 aa). Residues 256–333 form a head domain (RuvB-H) region; it reads KLGLDHIDHK…EHFGMEIPKV (78 aa). Residues R311 and R316 each contribute to the DNA site.

It belongs to the RuvB family. In terms of assembly, homohexamer. Forms an RuvA(8)-RuvB(12)-Holliday junction (HJ) complex. HJ DNA is sandwiched between 2 RuvA tetramers; dsDNA enters through RuvA and exits via RuvB. An RuvB hexamer assembles on each DNA strand where it exits the tetramer. Each RuvB hexamer is contacted by two RuvA subunits (via domain III) on 2 adjacent RuvB subunits; this complex drives branch migration. In the full resolvosome a probable DNA-RuvA(4)-RuvB(12)-RuvC(2) complex forms which resolves the HJ.

The protein resides in the cytoplasm. The enzyme catalyses ATP + H2O = ADP + phosphate + H(+). The RuvA-RuvB-RuvC complex processes Holliday junction (HJ) DNA during genetic recombination and DNA repair, while the RuvA-RuvB complex plays an important role in the rescue of blocked DNA replication forks via replication fork reversal (RFR). RuvA specifically binds to HJ cruciform DNA, conferring on it an open structure. The RuvB hexamer acts as an ATP-dependent pump, pulling dsDNA into and through the RuvAB complex. RuvB forms 2 homohexamers on either side of HJ DNA bound by 1 or 2 RuvA tetramers; 4 subunits per hexamer contact DNA at a time. Coordinated motions by a converter formed by DNA-disengaged RuvB subunits stimulates ATP hydrolysis and nucleotide exchange. Immobilization of the converter enables RuvB to convert the ATP-contained energy into a lever motion, pulling 2 nucleotides of DNA out of the RuvA tetramer per ATP hydrolyzed, thus driving DNA branch migration. The RuvB motors rotate together with the DNA substrate, which together with the progressing nucleotide cycle form the mechanistic basis for DNA recombination by continuous HJ branch migration. Branch migration allows RuvC to scan DNA until it finds its consensus sequence, where it cleaves and resolves cruciform DNA. This chain is Holliday junction branch migration complex subunit RuvB, found in Bacillus cereus (strain B4264).